Reading from the N-terminus, the 324-residue chain is MKQVNGQKLLESLGNGVSAIRGRITPDAPMDRVTWFRAGGLAELMFQPHDTDDLTTFLKLVPEEVPVLVVGVGSNLLVRDGGIPGVVIRLSAKGFGDLELAGEHRIKAGAICPDKNLAAMALDHGIGGFYFYYGIPGSIGGALRMNAGANAGETSARVLEVHAVDRKGDRHVLSKSEMGYGYRHSGAAKDLIFTHAIFEGYAEDKAKIRNDMDAVRQHRETVQPIREKTGGSTFKNPEGHSAWKLIDEAGCRGMMIGNAQMSPLHCNFMINTGQATGYELEYLGETVRQRVMDHSGVKLEWEIKRVGNFMPGYEIKEFLGRATA.

The FAD-binding PCMH-type domain maps to 36-211 (FRAGGLAELM…AEDKAKIRND (176 aa)). Arg183 is an active-site residue. The active-site Proton donor is the Ser232. Residue Glu302 is part of the active site.

It belongs to the MurB family. It depends on FAD as a cofactor.

The protein localises to the cytoplasm. The catalysed reaction is UDP-N-acetyl-alpha-D-muramate + NADP(+) = UDP-N-acetyl-3-O-(1-carboxyvinyl)-alpha-D-glucosamine + NADPH + H(+). It functions in the pathway cell wall biogenesis; peptidoglycan biosynthesis. Cell wall formation. The polypeptide is UDP-N-acetylenolpyruvoylglucosamine reductase (Sinorhizobium medicae (strain WSM419) (Ensifer medicae)).